The sequence spans 404 residues: G-protein coupled receptor 182 (404 aa).

Over 1-57 the chain is Extracellular; that stretch reads MSVKPSWGPGPSEGVTAVPTSDLGEIHNWTELLDLFNHTLSECHVELSQSTKRVVLF. Residues asparagine 28 and asparagine 37 are each glycosylated (N-linked (GlcNAc...) asparagine). Residues 58–79 traverse the membrane as a helical segment; sequence ALYLAMFVVGLVENLLVICVNW. The Cytoplasmic segment spans residues 80 to 90; sequence RGSGRAGLMNL. Residues 91–113 traverse the membrane as a helical segment; it reads YILNMAIADLGIVLSLPVWMLEV. Residues 114–127 lie on the Extracellular side of the membrane; sequence TLDYTWLWGSFSCR. A disulfide bridge links cysteine 126 with cysteine 202. Residues 128-149 traverse the membrane as a helical segment; that stretch reads FTHYFYFVNMYSSIFFLVCLSV. Residues 150 to 170 lie on the Cytoplasmic side of the membrane; the sequence is DRYVTLTSASPSWQRYQHRVR. Residues 171–193 form a helical membrane-spanning segment; sequence RAMCAGIWVLSAIIPLPEVVHIQ. Over 194 to 217 the chain is Extracellular; sequence LVEGPEPMCLFMAPFETYSTWALA. A helical transmembrane segment spans residues 218–239; sequence VALSTTILGFLLPFPLITVFNV. Residues 240 to 258 lie on the Cytoplasmic side of the membrane; sequence LTACRLRQPGQPKSRRHCL. The helical transmembrane segment at 259 to 280 threads the bilayer; the sequence is LLCAYVAVFVMCWLPYHVTLLL. Over 281-299 the chain is Extracellular; that stretch reads LTLHGTHISLHCHLVHLLY. A helical transmembrane segment spans residues 300–320; the sequence is FFYDVIDCFSMLHCVINPILY. Residues 321–404 are Cytoplasmic-facing; it reads NFLSPHFRGR…ISPTQPLTPS (84 aa).

Belongs to the G-protein coupled receptor 1 family. In terms of tissue distribution, highly expressed in heart, skeletal muscle, immune system, adrenal gland and liver.

Its subcellular location is the cell membrane. Its function is as follows. Orphan receptor. The protein is G-protein coupled receptor 182 (GPR182) of Homo sapiens (Human).